The sequence spans 145 residues: D-aminoacyl-tRNA deacylase (145 aa).

Residues 133–134 (GP) carry the Gly-cisPro motif, important for rejection of L-amino acids motif.

The protein belongs to the DTD family. As to quaternary structure, homodimer.

It localises to the cytoplasm. The enzyme catalyses glycyl-tRNA(Ala) + H2O = tRNA(Ala) + glycine + H(+). It carries out the reaction a D-aminoacyl-tRNA + H2O = a tRNA + a D-alpha-amino acid + H(+). Its function is as follows. An aminoacyl-tRNA editing enzyme that deacylates mischarged D-aminoacyl-tRNAs. Also deacylates mischarged glycyl-tRNA(Ala), protecting cells against glycine mischarging by AlaRS. Acts via tRNA-based rather than protein-based catalysis; rejects L-amino acids rather than detecting D-amino acids in the active site. By recycling D-aminoacyl-tRNA to D-amino acids and free tRNA molecules, this enzyme counteracts the toxicity associated with the formation of D-aminoacyl-tRNA entities in vivo and helps enforce protein L-homochirality. This Cutibacterium acnes (strain DSM 16379 / KPA171202) (Propionibacterium acnes) protein is D-aminoacyl-tRNA deacylase.